The following is a 498-amino-acid chain: Archaemetzincin-1 (498 aa).

H261 serves as a coordination point for Zn(2+). The active-site Proton acceptor is the E262. Zn(2+)-binding residues include H265, C272, C277, C296, and C299. Positions 332–381 (QEAGEPSVWEDTPPASADSGMCCESDSEPGTSVSEPLTPDAGSHTFASGP) are disordered.

Belongs to the peptidase M54 family. It depends on Zn(2+) as a cofactor.

Probable zinc metalloprotease. The protein is Archaemetzincin-1 (AMZ1) of Homo sapiens (Human).